We begin with the raw amino-acid sequence, 231 residues long: Ureidoacrylate amidohydrolase RutB (231 aa).

The Proton acceptor role is filled by Asp25. The active site involves Lys134. The Nucleophile role is filled by Cys167.

This sequence belongs to the isochorismatase family. RutB subfamily.

It catalyses the reaction (Z)-3-ureidoacrylate + H2O + H(+) = (Z)-3-aminoacrylate + NH4(+) + CO2. The catalysed reaction is (Z)-3-ureidoacrylate + H2O = (Z)-3-aminoacrylate + carbamate + H(+). It carries out the reaction (Z)-2-methylureidoacrylate + H2O + H(+) = (Z)-2-methylaminoacrylate + NH4(+) + CO2. Functionally, hydrolyzes ureidoacrylate to form aminoacrylate and carbamate. The carbamate hydrolyzes spontaneously, thereby releasing one of the nitrogen atoms of the pyrimidine ring as ammonia and one of its carbon atoms as CO2. This chain is Ureidoacrylate amidohydrolase RutB, found in Escherichia coli O18:K1:H7 (strain IHE3034 / ExPEC).